The sequence spans 219 residues: Casparian strip membrane protein 3 (219 aa).

Residues 1 to 43 (MDPGREDEVPLAATSPESRRTRSNGRGKATVGDAPPPAETVVS) form a disordered region. Over 1–57 (MDPGREDEVPLAATSPESRRTRSNGRGKATVGDAPPPAETVVSTKAAPLPTGGWKKG) the chain is Cytoplasmic. Residues 58 to 78 (IAILDFILRLGAIGAAMGASI) traverse the membrane as a helical segment. Over 79-108 (LMGTNEQILPFFTQFLQFHAQWDDFPVFKL) the chain is Extracellular. The helical transmembrane segment at 109–129 (FVVLNALAGGFLILSLPLSIV) threads the bilayer. The Cytoplasmic portion of the chain corresponds to 130–147 (CIVRPLAVGPRFLLLITD). Residues 148 to 168 (LVNMATVIAAASAAAAIVYVA) form a helical membrane-spanning segment. Over 169–193 (HNGSQDANWIAICQQFTDFCQGTSE) the chain is Extracellular. The N-linked (GlcNAc...) asparagine glycan is linked to asparagine 170. Residues 194 to 214 (AVVVSFVAAVFLVCLIVVSTL) traverse the membrane as a helical segment. At 215–219 (ALKRT) the chain is on the cytoplasmic side.

The protein belongs to the Casparian strip membrane proteins (CASP) family. As to quaternary structure, homodimer and heterodimers.

The protein localises to the cell membrane. In terms of biological role, regulates membrane-cell wall junctions and localized cell wall deposition. Required for establishment of the Casparian strip membrane domain (CSD) and the subsequent formation of Casparian strips, a cell wall modification of the root endodermis that determines an apoplastic barrier between the intraorganismal apoplasm and the extraorganismal apoplasm and prevents lateral diffusion. This is Casparian strip membrane protein 3 from Lotus japonicus (Lotus corniculatus var. japonicus).